A 149-amino-acid polypeptide reads, in one-letter code: Cytochrome c-type biogenesis protein CcmE (149 aa).

The Cytoplasmic segment spans residues 1-7; the sequence is MTRKQKR. Residues 8-28 traverse the membrane as a helical; Signal-anchor for type II membrane protein segment; sequence LAVIAGGVGFIMVAVLLVLFA. Over 29-149 the chain is Periplasmic; it reads FGQSIAYFYM…GVWKGEGEAK (121 aa). Residues His123 and Tyr127 each coordinate heme.

The protein belongs to the CcmE/CycJ family.

The protein resides in the cell inner membrane. Heme chaperone required for the biogenesis of c-type cytochromes. Transiently binds heme delivered by CcmC and transfers the heme to apo-cytochromes in a process facilitated by CcmF and CcmH. In Allorhizobium ampelinum (strain ATCC BAA-846 / DSM 112012 / S4) (Agrobacterium vitis (strain S4)), this protein is Cytochrome c-type biogenesis protein CcmE.